A 147-amino-acid polypeptide reads, in one-letter code: 3-dehydroquinate dehydratase 1 (147 aa).

Catalysis depends on tyrosine 23, which acts as the Proton acceptor. Substrate is bound by residues asparagine 75, histidine 81, and aspartate 88. Histidine 101 functions as the Proton donor in the catalytic mechanism. Substrate-binding positions include 102–103 (LS) and arginine 112.

This sequence belongs to the type-II 3-dehydroquinase family. In terms of assembly, homododecamer.

The enzyme catalyses 3-dehydroquinate = 3-dehydroshikimate + H2O. It functions in the pathway metabolic intermediate biosynthesis; chorismate biosynthesis; chorismate from D-erythrose 4-phosphate and phosphoenolpyruvate: step 3/7. Its function is as follows. Catalyzes a trans-dehydration via an enolate intermediate. The protein is 3-dehydroquinate dehydratase 1 (aroQ1) of Pseudomonas aeruginosa (strain ATCC 15692 / DSM 22644 / CIP 104116 / JCM 14847 / LMG 12228 / 1C / PRS 101 / PAO1).